An 89-amino-acid polypeptide reads, in one-letter code: Small ribosomal subunit protein uS15 (89 aa).

Belongs to the universal ribosomal protein uS15 family. Part of the 30S ribosomal subunit. Forms a bridge to the 50S subunit in the 70S ribosome, contacting the 23S rRNA.

Functionally, one of the primary rRNA binding proteins, it binds directly to 16S rRNA where it helps nucleate assembly of the platform of the 30S subunit by binding and bridging several RNA helices of the 16S rRNA. In terms of biological role, forms an intersubunit bridge (bridge B4) with the 23S rRNA of the 50S subunit in the ribosome. The protein is Small ribosomal subunit protein uS15 of Acidothermus cellulolyticus (strain ATCC 43068 / DSM 8971 / 11B).